Consider the following 154-residue polypeptide: Myoglobin (154 aa).

The 147-residue stretch at glycine 2–lysine 148 folds into the Globin domain. Histidine 65 is a nitrite binding site. Position 65 (histidine 65) interacts with O2. Heme b is bound at residue histidine 94.

It belongs to the globin family. In terms of assembly, monomeric.

Its subcellular location is the cytoplasm. The protein resides in the sarcoplasm. It carries out the reaction Fe(III)-heme b-[protein] + nitric oxide + H2O = Fe(II)-heme b-[protein] + nitrite + 2 H(+). The catalysed reaction is H2O2 + AH2 = A + 2 H2O. Monomeric heme protein which primary function is to store oxygen and facilitate its diffusion within muscle tissues. Reversibly binds oxygen through a pentacoordinated heme iron and enables its timely and efficient release as needed during periods of heightened demand. Depending on the oxidative conditions of tissues and cells, and in addition to its ability to bind oxygen, it also has a nitrite reductase activity whereby it regulates the production of bioactive nitric oxide. Under stress conditions, like hypoxia and anoxia, it also protects cells against reactive oxygen species thanks to its pseudoperoxidase activity. The chain is Myoglobin (MB) from Chelonia mydas (Green sea-turtle).